The sequence spans 92 residues: Elongation factor 1-beta (92 aa).

This sequence belongs to the EF-1-beta/EF-1-delta family.

Its function is as follows. Promotes the exchange of GDP for GTP in EF-1-alpha/GDP, thus allowing the regeneration of EF-1-alpha/GTP that could then be used to form the ternary complex EF-1-alpha/GTP/AAtRNA. This Pyrobaculum neutrophilum (strain DSM 2338 / JCM 9278 / NBRC 100436 / V24Sta) (Thermoproteus neutrophilus) protein is Elongation factor 1-beta.